A 145-amino-acid polypeptide reads, in one-letter code: 3-dehydroquinate dehydratase (145 aa).

Tyr-22 serves as the catalytic Proton acceptor. The substrate site is built by Asn-71, His-77, and Asp-84. The active-site Proton donor is His-97. Residues 98–99 (LS) and Arg-108 each bind substrate.

The protein belongs to the type-II 3-dehydroquinase family. As to quaternary structure, homododecamer.

It carries out the reaction 3-dehydroquinate = 3-dehydroshikimate + H2O. It functions in the pathway metabolic intermediate biosynthesis; chorismate biosynthesis; chorismate from D-erythrose 4-phosphate and phosphoenolpyruvate: step 3/7. In terms of biological role, catalyzes a trans-dehydration via an enolate intermediate. The polypeptide is 3-dehydroquinate dehydratase (Francisella philomiragia subsp. philomiragia (strain ATCC 25017 / CCUG 19701 / FSC 153 / O#319-036)).